The chain runs to 420 residues: COP9 signalosome complex subunit 11 (420 aa).

Positions 177-346 (SIHEHPSLVD…VYYKEDLPVG (170 aa)) constitute a PCI domain. Residues 386–420 (VEPLNRSQDMDAFELHEQSEDEEYEEEHLEEGENV) are disordered. The span at 404–420 (SEDEEYEEEHLEEGENV) shows a compositional bias: acidic residues.

In terms of assembly, component of a COP9 signalosome-like (CSN) complex.

It localises to the cytoplasm. The protein localises to the nucleus. Component of the COP9 signalosome (CSN) complex that acts as an regulator of the ubiquitin (Ubl) conjugation pathway by mediating the deneddylation of the cullin subunit of SCF-type E3 ubiquitin-protein ligase complexes The CSN complex is involved in the regulation of the mating pheromone response. PCI8 may also be involved in transcriptional and translational control. The sequence is that of COP9 signalosome complex subunit 11 (PCI8) from Eremothecium gossypii (strain ATCC 10895 / CBS 109.51 / FGSC 9923 / NRRL Y-1056) (Yeast).